Consider the following 62-residue polypeptide: MNVSYLSKRFAEMKKYETDCMNKLMDFAKFLYIQGHLSITEFRNSMKVLEANGAESPAYEMN.

This is an uncharacterized protein from Bacillus subtilis (strain 168).